The chain runs to 393 residues: Isocitrate dehydrogenase [NADP] (393 aa).

The D-threo-isocitrate site is built by S102, N104, R108, R118, and R142. D283 is a binding site for Mg(2+).

This sequence belongs to the isocitrate and isopropylmalate dehydrogenases family. As to quaternary structure, homodimer. Requires Mg(2+) as cofactor. It depends on Mn(2+) as a cofactor.

The enzyme catalyses D-threo-isocitrate + NADP(+) = 2-oxoglutarate + CO2 + NADPH. In terms of biological role, catalyzes the oxidative decarboxylation of isocitrate to 2-oxoglutarate and carbon dioxide with the concomitant reduction of NADP(+). In Streptococcus mutans serotype c (strain ATCC 700610 / UA159), this protein is Isocitrate dehydrogenase [NADP] (icd).